The following is a 238-amino-acid chain: tRNA1(Val) (adenine(37)-N6)-methyltransferase (238 aa).

Belongs to the methyltransferase superfamily. tRNA (adenine-N(6)-)-methyltransferase family.

The protein resides in the cytoplasm. It catalyses the reaction adenosine(37) in tRNA1(Val) + S-adenosyl-L-methionine = N(6)-methyladenosine(37) in tRNA1(Val) + S-adenosyl-L-homocysteine + H(+). Functionally, specifically methylates the adenine in position 37 of tRNA(1)(Val) (anticodon cmo5UAC). In Shewanella sp. (strain W3-18-1), this protein is tRNA1(Val) (adenine(37)-N6)-methyltransferase.